We begin with the raw amino-acid sequence, 714 residues long: MAAKPKTPPPVDSLTRAQAKIEHKRLALEIETHNERYYQKDAPTVSDAAYDALRQRLEAIEARFPDLITANSPTQTVGAAPARGFAKVQHAVPMLSLGNAFSDEEVAEFVERIQRFLKLGPDDIPAIVAEPKIDGLSLSLRYENGELVRAATRGDGFTGEDVTANVRTIKDVPHNLRGRNIPTACELRGEVYMLKTDFLALNKKQEDAGDTVFANPRNSAAGSLRQKDVAITASRPLKFFAYAWGEMTDRPADTQHDMLEWLKDVGFKVNPLIELCNSVEKVLKFYRKIGEQRASLGYDIDGVVYKVDRLDWQERLGFVSRSPRWAIAHKFAAEQATTILKGIDIQVGRTGAMTPVARLEPVTIGGVVVQNATLHNEDYIKGIGNDGQPIRDGVDLRVGDTVVVQRAGDVIPQVVSVVIDKRPNSAQPYAFPHTCPICGSHAVREEGEAVRRCTGALICPAQAVERLKHFVSRLAFDIDGLGEKQIQEFHERGWIKEPADIFTLRERNPKIKLEELEGFGEVSVRNLFAAIDARRTIELNRLIFALGIRHVGEGNAKLLARHYGGIDAFRAAMSEAAAAQTDDGNASEAYADLNNISGIGDIVADAVVEFFAETRNVKALNDLLEEIEVLPVAQARNDSAVAGKTVVFTGSLEKFTRDEAKASAERMGAKVSGSVSKKTDLVVAGPGAGSKLKDAEKHGVQVISEDEWLKLIEG.

NAD(+)-binding positions include aspartate 47–aspartate 51, serine 96–leucine 97, and glutamate 130. The active-site N6-AMP-lysine intermediate is the lysine 132. Positions 153, 190, 306, and 330 each coordinate NAD(+). Zn(2+)-binding residues include cysteine 435, cysteine 438, cysteine 453, and cysteine 459. The BRCT domain maps to arginine 636 to glycine 714.

It belongs to the NAD-dependent DNA ligase family. LigA subfamily. Requires Mg(2+) as cofactor. The cofactor is Mn(2+).

It catalyses the reaction NAD(+) + (deoxyribonucleotide)n-3'-hydroxyl + 5'-phospho-(deoxyribonucleotide)m = (deoxyribonucleotide)n+m + AMP + beta-nicotinamide D-nucleotide.. DNA ligase that catalyzes the formation of phosphodiester linkages between 5'-phosphoryl and 3'-hydroxyl groups in double-stranded DNA using NAD as a coenzyme and as the energy source for the reaction. It is essential for DNA replication and repair of damaged DNA. The protein is DNA ligase of Nitrobacter hamburgensis (strain DSM 10229 / NCIMB 13809 / X14).